We begin with the raw amino-acid sequence, 569 residues long: BICD family-like cargo adapter 1 (569 aa).

Residues 1-36 form a disordered region; that stretch reads MSASCLDLISAPPQPDSDRMDRALNPGRQNSPDTAG. Positions 97 to 101 match the CC1 box motif; that stretch reads AAKLG. The stretch at 102–283 forms a coiled coil; it reads KALLERNQDL…TLELEKHCHH (182 aa). The disordered stretch occupies residues 385 to 405; sequence ALSTDSSMDESSETLSAKDVP. Residues 458–520 are a coiled coil; sequence NEQLQSAIRD…LEAWQDDMHR (63 aa). The tract at residues 533-554 is disordered; it reads EWKDPPFSFSRRGAAASRPTQR.

Belongs to the BICDR family. As to quaternary structure, part of a tripartite complex with dynein and dynactin, acts an adapter linking the dynein motor complex and dynactin. As to expression, highly expressed in developing neural tissues and developing eye.

Its subcellular location is the cytoplasm. The protein localises to the cytoskeleton. The protein resides in the microtubule organizing center. It localises to the centrosome. Acts as an adapter protein linking the dynein motor complex to various cargos and converts dynein from a non-processive to a highly processive motor in the presence of dynactin. Facilitates the interaction between dynein and dynactin and activates dynein processivity (the ability to move along a microtubule for a long distance without falling off the track). Predominantly recruits 2 dyneins, which increases both the force and speed of the microtubule motor. Component of secretory vesicle machinery in developing neurons that acts as a regulator of neurite outgrowth. Regulates the secretory vesicle transport by controlling the accumulation of Rab6-containing secretory vesicles in the pericentrosomal region restricting anterograde secretory transport during the early phase of neuronal differentiation, thereby inhibiting neuritogenesis. The protein is BICD family-like cargo adapter 1 (bicdl1) of Danio rerio (Zebrafish).